We begin with the raw amino-acid sequence, 172 residues long: R-phycocyanin-2 beta chain (172 aa).

Asn-72 bears the N4-methylasparagine mark. Position 82 (Cys-82) interacts with (2R,3E)-phycocyanobilin. Cys-153 serves as a coordination point for (2R,3E)-phycoerythrobilin.

Belongs to the phycobiliprotein family. Heterodimer of an alpha and a beta chain. Contains two covalently linked bilin chromophores.

It localises to the cellular thylakoid membrane. Light-harvesting photosynthetic bile pigment-protein from the phycobiliprotein complex. This chain is R-phycocyanin-2 beta chain (rpcB), found in Synechococcus sp. (strain WH8103).